A 46-amino-acid polypeptide reads, in one-letter code: Putative antitoxin VapB3 (46 aa).

The protein belongs to the UPF0165 family.

In terms of biological role, possibly the antitoxin component of a type II toxin-antitoxin (TA) system. Its cognate toxin is VapC3 (Potential). The protein is Putative antitoxin VapB3 (vapB3) of Pyrococcus furiosus (strain ATCC 43587 / DSM 3638 / JCM 8422 / Vc1).